The sequence spans 470 residues: Mucin-like protein 3 (470 aa).

Positions 1 to 29 are cleaved as a signal peptide; the sequence is MAQMTSGLYPMFGFFICLLFLPASWEAGA. Residues 30-401 are Extracellular-facing; the sequence is NTFQELQKTG…EGSNSFPAWA (372 aa). Disordered stretches follow at residues 57-234 and 248-318; these read RALS…HTIP and TKEA…KAPE. Residues 75–87 show a composition bias toward polar residues; that stretch reads STATQKPKRQCNT. N-linked (GlcNAc...) asparagine glycosylation occurs at N122. A compositionally biased stretch (basic and acidic residues) spans 132-152; it reads ARNERSADDHGSTNSEKRSDG. Polar residues predominate over residues 169–193; sequence TRTSGTPVSSTETSTKLRTTSQKPE. A compositionally biased stretch (basic and acidic residues) spans 194–203; the sequence is TSSHDSDLIR. Polar residues predominate over residues 204 to 222; that stretch reads KSTSLPVKSTEVSRTSYRT. Residues 260–273 are compositionally biased toward basic and acidic residues; it reads KYERETRSASERIS. Residues 283-295 are compositionally biased toward polar residues; sequence HTPSAGETTTQVS. N325 is a glycosylation site (N-linked (GlcNAc...) asparagine). Residues 402–422 form a helical membrane-spanning segment; sequence IVVVILMAVIILLIFLGLIFL. Residues 423–470 lie on the Cytoplasmic side of the membrane; the sequence is VSCASRARHQLTQNSEDAEPEDKGGRNSYPVYLMEQQNLNLNQISSPP.

The protein resides in the cell membrane. Its subcellular location is the cytoplasm. May modulate NF-kappaB signaling and play a role in cell growth. This Rattus norvegicus (Rat) protein is Mucin-like protein 3.